The chain runs to 328 residues: Malate dehydrogenase (328 aa).

11–17 contacts NAD(+); it reads GAAGQIG. The substrate site is built by Arg-94 and Arg-100. NAD(+)-binding positions include Asn-107, Gln-114, and 131–133; that span reads VGN. Residues Asn-133 and Arg-164 each coordinate substrate. The active-site Proton acceptor is His-189.

The protein belongs to the LDH/MDH superfamily. MDH type 2 family.

The enzyme catalyses (S)-malate + NAD(+) = oxaloacetate + NADH + H(+). Functionally, catalyzes the reversible oxidation of malate to oxaloacetate. The chain is Malate dehydrogenase from Xanthomonas oryzae pv. oryzae (strain PXO99A).